The chain runs to 419 residues: MAARRTHERDPIYKIKGLAKDMLDGVFDDLVEKNVLNGDELLKIGESASFILNKAENLVENFLEKTDMAGKIFAGHIANSQEQLSLQFSNDEDDGPQKICTPSSPSESKRKVEDDEMEVNAGLAHESHLMLTAPHGLQSSEVQDTLKLCPRDQFCKIKTERAKEIYPVMEKEGRTRLALIICNKKFDYLFDRDNADTDILNMQELLENLGYSVVLKENLTAQEMETELMQFAGRPEHQSSDSTFLVFMSHGILEGICGVKHRNKKPDVLHDDTIFKIFNNSNCRSLRNKPKILIMQACRGRYNGTIWVSTNKGIATADTDEERVLSCKWNNSITKAHVETDFIAFKSSTPHNISWKVGKTGSLFISKLIDCFKKYCWCYHLEEIFRKVQHSFEVPGELTQMPTIERVSMTRYFYLFPGN.

The 92-residue stretch at 1 to 92 (MAARRTHERD…QLSLQFSNDE (92 aa)) folds into the CARD domain. S85 carries the phosphoserine modification. Residues 88–113 (FSNDEDDGPQKICTPSSPSESKRKVE) form a disordered region. Residues H250 and C298 contribute to the active site.

It belongs to the peptidase C14A family. Heterotetramer that consists of two anti-parallel arranged heterodimers, each one formed by two subunits (Potential). Interacts with TRAF2 under resting conditions; this interaction is reduced in ER stress conditions. Mainly expressed in skeletal muscle and lung.

In terms of biological role, involved in the activation cascade of caspases responsible for apoptosis execution. This chain is Caspase-12 (Casp12), found in Mus musculus (Mouse).